The sequence spans 331 residues: Lactamase-like protein nscB (331 aa).

The Zn(2+) site is built by H106, H108, D110, and H111. Residue D110 is the Proton donor/acceptor of the active site.

It belongs to the metallo-beta-lactamase superfamily. Zn(2+) serves as cofactor.

It participates in secondary metabolite biosynthesis. Functionally, lactamase-like protein; part of the gene cluster that mediates the biosynthesis of neosartoricin B, a prenylated anthracenone that probably exhibits T-cell antiproliferative activity, suggestive of a physiological role as an immunosuppressive agent. The non-reducing polyketide synthase nscA probably synthesizes and cyclizes the decaketide backbone. The hydrolase nscB then mediates the product release through hydrolysis followed by spontaneous decarboxylation. The prenyltransferase nscD catalyzes the addition of the dimethylallyl group to the aromatic C5. The FAD-dependent monooxygenase nscC is then responsible for the stereospecific hydroxylation at C2. Neosartoricin B can be converted into two additional compounds neosartoricins C and D. Neosartoricin C is a spirocyclic compound that is cyclized through the attack of C3 hydroxyl on C14, followed by dehydration. On the other hand, neosartoricin D is a further cyclized compound in which attack of C2 on C14 in neosartoricin C results in the formation of the acetal-containing dioxabicyclo-octanone ring. Both of these compounds are novel and possibly represent related metabolites of the gene cluster. In Trichophyton equinum (strain ATCC MYA-4606 / CBS 127.97) (Horse ringworm fungus), this protein is Lactamase-like protein nscB.